Consider the following 358-residue polypeptide: Phosphate acyltransferase (358 aa).

This sequence belongs to the PlsX family. In terms of assembly, homodimer. Probably interacts with PlsY.

The protein resides in the cytoplasm. The catalysed reaction is a fatty acyl-[ACP] + phosphate = an acyl phosphate + holo-[ACP]. It functions in the pathway lipid metabolism; phospholipid metabolism. Functionally, catalyzes the reversible formation of acyl-phosphate (acyl-PO(4)) from acyl-[acyl-carrier-protein] (acyl-ACP). This enzyme utilizes acyl-ACP as fatty acyl donor, but not acyl-CoA. The sequence is that of Phosphate acyltransferase from Escherichia fergusonii (strain ATCC 35469 / DSM 13698 / CCUG 18766 / IAM 14443 / JCM 21226 / LMG 7866 / NBRC 102419 / NCTC 12128 / CDC 0568-73).